The following is a 197-amino-acid chain: RNA pyrophosphohydrolase (197 aa).

One can recognise a Nudix hydrolase domain in the interval 6-150 (GYRPNVGIVI…KRDVYRKVMR (145 aa)). A Nudix box motif is present at residues 38 to 59 (GGINEGENIETAMYRELYEEVG).

The protein belongs to the Nudix hydrolase family. RppH subfamily. It depends on a divalent metal cation as a cofactor.

Functionally, accelerates the degradation of transcripts by removing pyrophosphate from the 5'-end of triphosphorylated RNA, leading to a more labile monophosphorylated state that can stimulate subsequent ribonuclease cleavage. This is RNA pyrophosphohydrolase from Haemophilus ducreyi (strain 35000HP / ATCC 700724).